The sequence spans 215 residues: Large ribosomal subunit protein uL16m (215 aa).

A mitochondrion-targeting transit peptide spans 1-36 (MALQQYNKFPFFFSGILGPTRLNGLQMPPIQTMVRW).

The protein belongs to the universal ribosomal protein uL16 family. In terms of assembly, component of the mitochondrial large ribosomal subunit (mt-LSU). Mature yeast 74S mitochondrial ribosomes consist of a small (37S) and a large (54S) subunit. The 37S small subunit contains a 15S ribosomal RNA (15S mt-rRNA) and at least 32 different proteins. The 54S large subunit contains a 21S rRNA (21S mt-rRNA) and at least 45 different proteins.

The protein localises to the mitochondrion. Component of the mitochondrial ribosome (mitoribosome), a dedicated translation machinery responsible for the synthesis of mitochondrial genome-encoded proteins, including at least some of the essential transmembrane subunits of the mitochondrial respiratory chain. The mitoribosomes are attached to the mitochondrial inner membrane and translation products are cotranslationally integrated into the membrane. The sequence is that of Large ribosomal subunit protein uL16m (mrpl16) from Schizosaccharomyces pombe (strain 972 / ATCC 24843) (Fission yeast).